Reading from the N-terminus, the 175-residue chain is uncharacterized protein (175 aa).

An N-terminal signal peptide occupies residues 1–22 (MNRIVGILISILMLACIGVTMA).

This is an uncharacterized protein from Archaeoglobus fulgidus (strain ATCC 49558 / DSM 4304 / JCM 9628 / NBRC 100126 / VC-16).